The chain runs to 134 residues: Profilin-2 (134 aa).

Cysteines 13 and 118 form a disulfide. Positions 84-100 (AVIRGKKGSGGITIKKT) match the Involved in PIP2 interaction motif. T114 carries the post-translational modification Phosphothreonine.

This sequence belongs to the profilin family. In terms of assembly, occurs in many kinds of cells as a complex with monomeric actin in a 1:1 ratio. Post-translationally, phosphorylated by MAP kinases.

The protein localises to the cytoplasm. It is found in the cytoskeleton. Its function is as follows. Binds to actin and affects the structure of the cytoskeleton. At high concentrations, profilin prevents the polymerization of actin, whereas it enhances it at low concentrations. The polypeptide is Profilin-2 (Olea europaea (Common olive)).